Here is a 187-residue protein sequence, read N- to C-terminus: Large ribosomal subunit protein uL6 (187 aa).

It belongs to the universal ribosomal protein uL6 family. Part of the 50S ribosomal subunit.

Functionally, this protein binds to the 23S rRNA, and is important in its secondary structure. It is located near the subunit interface in the base of the L7/L12 stalk, and near the tRNA binding site of the peptidyltransferase center. This is Large ribosomal subunit protein uL6 from Thermosynechococcus vestitus (strain NIES-2133 / IAM M-273 / BP-1).